The primary structure comprises 313 residues: Ankyrin repeat family A protein 2 (313 aa).

ANK repeat units follow at residues 148-180 (ANSLSVHQLAAQGEMLYLATRIEQENVINHTDE), 181-213 (EGFTPLMWAAAHGQIAVVEFLLQNGADPQLLGK), 214-246 (GRESALSLACSKGYTDIVKMLLDCGVDVNEYDW), 247-279 (NGGTPLLYAVHGNHVKCVKMLLENGADPTIETD), and 280-313 (SGYNSMDLAVALGYRSVQQVIESHLLKLLQNIKE).

As to quaternary structure, interacts (via ANK repeats) with CCDC8 (via PxLPxI/L motif); mediates the interaction with the 3M complex which is composed of CCDC8, CUL7 and OBSL1. Interacts (via ANK repeats) with HDAC4 (via PxLPxI/L motif). Interacts (via ANK repeats) with HDAC5 (via PxLPxI/L motif). Interacts (via ANK repeats) with LRP2/megalin (via PxLPxI/L motif). Interacts (via ANK repeats) with RFX7 (via PxLPxI/L motif). Interacts with AHRR. Interacts with NEK6.

Its subcellular location is the cytoplasm. It is found in the cytoskeleton. It localises to the membrane. Functionally, may regulate the interaction between the 3M complex and the histone deacetylases HDAC4 and HDAC5. May also regulate LRP2/megalin. The chain is Ankyrin repeat family A protein 2 (ANKRA2) from Bos taurus (Bovine).